The following is a 509-amino-acid chain: Seipin-3 (509 aa).

The disordered stretch occupies residues 33-73 (YDCLNSSPPANLRRRRLPMDTDSSSSSSTSSLESCEKRSTV). Positions 52-63 (DTDSSSSSSTSS) are enriched in low complexity. 2 helical membrane passes run 238–258 (LFCAVYVGIMLFALLVSAFMI) and 455–475 (LFVWISMSLFIMELLFALVFF).

The protein belongs to the seipin family. As to expression, expressed in seeds, seedlings, leaves, stems and roots. Not detected in flowers.

It is found in the endoplasmic reticulum membrane. In terms of biological role, involved in lipid metabolism and lipid droplet (LD) morphology, number, and size. Supports the formation of small-sized LDs and modulates triacylglycerol accumulation. Induces probably a reorganization of the endoplasmic reticulum into LD-forming domains. This Arabidopsis thaliana (Mouse-ear cress) protein is Seipin-3.